An 80-amino-acid chain; its full sequence is Large ribosomal subunit protein bL31B (80 aa).

It belongs to the bacterial ribosomal protein bL31 family. Type B subfamily. As to quaternary structure, part of the 50S ribosomal subunit.

The chain is Large ribosomal subunit protein bL31B from Streptococcus sanguinis (strain SK36).